Consider the following 153-residue polypeptide: Two-component response regulator ARR17 (153 aa).

A Response regulatory domain is found at 21–149; the sequence is HVLAVDDNLI…DVEKLKCHLL (129 aa). Asp82 is modified (4-aspartylphosphate).

It belongs to the ARR family. Type-A subfamily. Two-component system major event consists of a His-to-Asp phosphorelay between a sensor histidine kinase (HK) and a response regulator (RR). In plants, the His-to-Asp phosphorelay involves an additional intermediate named Histidine-containing phosphotransfer protein (HPt). This multistep phosphorelay consists of a His-Asp-His-Asp sequential transfer of a phosphate group between first a His and an Asp of the HK protein, followed by the transfer to a conserved His of the HPt protein and finally the transfer to an Asp in the receiver domain of the RR protein.

It localises to the nucleus. Its function is as follows. Functions as a response regulator involved in His-to-Asp phosphorelay signal transduction system. Phosphorylation of the Asp residue in the receiver domain activates the ability of the protein to promote the transcription of target genes. Type-A response regulators seem to act as negative regulators of the cytokinin signaling. The sequence is that of Two-component response regulator ARR17 (ARR17) from Arabidopsis thaliana (Mouse-ear cress).